Consider the following 205-residue polypeptide: GTP cyclohydrolase 1 (205 aa).

Residues cysteine 94, histidine 97, and cysteine 165 each coordinate Zn(2+).

It belongs to the GTP cyclohydrolase I family. Homomer.

It catalyses the reaction GTP + H2O = 7,8-dihydroneopterin 3'-triphosphate + formate + H(+). The protein operates within cofactor biosynthesis; 7,8-dihydroneopterin triphosphate biosynthesis; 7,8-dihydroneopterin triphosphate from GTP: step 1/1. This is GTP cyclohydrolase 1 from Sinorhizobium fredii (strain NBRC 101917 / NGR234).